A 285-amino-acid chain; its full sequence is Glutamate racemase (285 aa).

Residues 30–31 (DS) and 62–63 (YG) contribute to the substrate site. The active-site Proton donor/acceptor is the Cys94. Residue 95–96 (NT) participates in substrate binding. Cys206 serves as the catalytic Proton donor/acceptor. 207 to 208 (TH) serves as a coordination point for substrate.

Belongs to the aspartate/glutamate racemases family.

The enzyme catalyses L-glutamate = D-glutamate. The protein operates within cell wall biogenesis; peptidoglycan biosynthesis. Its function is as follows. Provides the (R)-glutamate required for cell wall biosynthesis. This is Glutamate racemase from Pectobacterium carotovorum subsp. carotovorum (strain PC1).